Here is a 232-residue protein sequence, read N- to C-terminus: tRNA (guanine-N(7)-)-methyltransferase (232 aa).

Residues E63, E88, D115, and D137 each coordinate S-adenosyl-L-methionine. The active site involves D137. Substrate-binding positions include K141, D173, and 211–214 (TRYE).

Belongs to the class I-like SAM-binding methyltransferase superfamily. TrmB family.

It catalyses the reaction guanosine(46) in tRNA + S-adenosyl-L-methionine = N(7)-methylguanosine(46) in tRNA + S-adenosyl-L-homocysteine. Its pathway is tRNA modification; N(7)-methylguanine-tRNA biosynthesis. Functionally, catalyzes the formation of N(7)-methylguanine at position 46 (m7G46) in tRNA. This is tRNA (guanine-N(7)-)-methyltransferase from Agrobacterium fabrum (strain C58 / ATCC 33970) (Agrobacterium tumefaciens (strain C58)).